The primary structure comprises 197 residues: Probable nicotinate-nucleotide adenylyltransferase (197 aa).

It belongs to the NadD family.

It carries out the reaction nicotinate beta-D-ribonucleotide + ATP + H(+) = deamido-NAD(+) + diphosphate. Its pathway is cofactor biosynthesis; NAD(+) biosynthesis; deamido-NAD(+) from nicotinate D-ribonucleotide: step 1/1. Its function is as follows. Catalyzes the reversible adenylation of nicotinate mononucleotide (NaMN) to nicotinic acid adenine dinucleotide (NaAD). The chain is Probable nicotinate-nucleotide adenylyltransferase from Chlorobium phaeobacteroides (strain DSM 266 / SMG 266 / 2430).